Consider the following 1258-residue polypeptide: Ice nucleation protein (1258 aa).

Residues alanine 162–isoleucine 1217 are octapeptide periodicity. 5 disordered regions span residues tyrosine 260 to aspartate 287, threonine 311 to serine 342, tyrosine 356 to aspartate 383, threonine 407 to serine 438, and tyrosine 452 to leucine 480. 5 stretches are compositionally biased toward polar residues: residues glycine 261–serine 286, threonine 311–serine 334, glycine 357–serine 382, threonine 407–serine 430, and glycine 453–leucine 480.

The protein belongs to the bacterial ice nucleation protein family.

Its subcellular location is the cell outer membrane. In terms of biological role, ice nucleation proteins enable bacteria to nucleate crystallization in supercooled water. This Enterobacter agglomerans (Erwinia herbicola) protein is Ice nucleation protein (iceE).